The primary structure comprises 560 residues: DNA ligase B (560 aa).

Lys-124 functions as the N6-AMP-lysine intermediate in the catalytic mechanism.

It belongs to the NAD-dependent DNA ligase family. LigB subfamily.

It carries out the reaction NAD(+) + (deoxyribonucleotide)n-3'-hydroxyl + 5'-phospho-(deoxyribonucleotide)m = (deoxyribonucleotide)n+m + AMP + beta-nicotinamide D-nucleotide.. Its function is as follows. Catalyzes the formation of phosphodiester linkages between 5'-phosphoryl and 3'-hydroxyl groups in double-stranded DNA using NAD as a coenzyme and as the energy source for the reaction. The protein is DNA ligase B of Citrobacter koseri (strain ATCC BAA-895 / CDC 4225-83 / SGSC4696).